Here is a 473-residue protein sequence, read N- to C-terminus: MAPPRKLHIKSYGCQMNVYDAQRMVDVLAPEGFVETATVDDADLVILNTCHIREKASEKVYSELGRLRLARDEAASSGRRMQIAVAGCVAQAEGEEIVRRAPVVDVVVGPQSYHHLPQLLARADQAGRALETEFPVEDKFGFLPQPRPETIRARGISAFVTVQEGCDKFCTFCVVPYTRGAEVSRPVSAIIDDVKRLADNGVREITLIGQNVNAYHGEGPDSRAWTLGRLLRRLAAVPGIVRLRYSTSHPNDVDDELIEAHRDLDALMPFVHLPVQSGSDPILAAMNRKHTAADYRRVIDRFRAVRPQIAFSSDFIVGFPGETEADFAATLALVTQIGYAGAYSFKYSPRPGTPAADMQEMVPAAVMDERLERLQQLIDSQQSAFNKAAIGQTVDVLFERAGRKPGQIVGRTAYLQPAHVFPGPMFLGPGMAPDSLVGQILPVRVDSLERYSLLGELAAKPPQHARPLAATGA.

In terms of domain architecture, MTTase N-terminal spans 5-125 (RKLHIKSYGC…LPQLLARADQ (121 aa)). [4Fe-4S] cluster contacts are provided by C14, C50, C88, C166, C170, and C173. The region spanning 152–384 (RARGISAFVT…QQLIDSQQSA (233 aa)) is the Radical SAM core domain. In terms of domain architecture, TRAM spans 387 to 459 (KAAIGQTVDV…RYSLLGELAA (73 aa)).

The protein belongs to the methylthiotransferase family. MiaB subfamily. As to quaternary structure, monomer. [4Fe-4S] cluster is required as a cofactor.

It is found in the cytoplasm. The enzyme catalyses N(6)-dimethylallyladenosine(37) in tRNA + (sulfur carrier)-SH + AH2 + 2 S-adenosyl-L-methionine = 2-methylsulfanyl-N(6)-dimethylallyladenosine(37) in tRNA + (sulfur carrier)-H + 5'-deoxyadenosine + L-methionine + A + S-adenosyl-L-homocysteine + 2 H(+). In terms of biological role, catalyzes the methylthiolation of N6-(dimethylallyl)adenosine (i(6)A), leading to the formation of 2-methylthio-N6-(dimethylallyl)adenosine (ms(2)i(6)A) at position 37 in tRNAs that read codons beginning with uridine. The chain is tRNA-2-methylthio-N(6)-dimethylallyladenosine synthase from Rhodopseudomonas palustris (strain BisB5).